An 870-amino-acid chain; its full sequence is Protein csx2 (870 aa).

The disordered stretch occupies residues 212–251 (TSPEISDAPPLSGNVDPLPINSPPLTNPVARDIDQTEPED). The PH domain maps to 510 to 614 (TSAKQGLLLA…WIEAIQYSIS (105 aa)). Phosphoserine occurs at positions 625, 653, and 655. The disordered stretch occupies residues 647 to 672 (RVASVTSPSRHNSDSKEKKQTKSPSL). Over residues 657–666 (HNSDSKEKKQ) the composition is skewed to basic and acidic residues. One can recognise an Arf-GAP domain in the interval 670–791 (PSLVKTLKEM…RFIKSSFSHD (122 aa)). The segment at 686–710 (CADCNTTARVEWCAINFPVVLCIDC) adopts a C4-type zinc-finger fold.

In Schizosaccharomyces pombe (strain 972 / ATCC 24843) (Fission yeast), this protein is Protein csx2 (csx2).